Reading from the N-terminus, the 335-residue chain is Histidinol-phosphate aminotransferase (335 aa).

K202 is modified (N6-(pyridoxal phosphate)lysine).

It belongs to the class-II pyridoxal-phosphate-dependent aminotransferase family. Histidinol-phosphate aminotransferase subfamily. Homodimer. Pyridoxal 5'-phosphate serves as cofactor.

The enzyme catalyses L-histidinol phosphate + 2-oxoglutarate = 3-(imidazol-4-yl)-2-oxopropyl phosphate + L-glutamate. It functions in the pathway amino-acid biosynthesis; L-histidine biosynthesis; L-histidine from 5-phospho-alpha-D-ribose 1-diphosphate: step 7/9. The polypeptide is Histidinol-phosphate aminotransferase (Thermotoga neapolitana (strain ATCC 49049 / DSM 4359 / NBRC 107923 / NS-E)).